Consider the following 284-residue polypeptide: Exported repetitive protein (284 aa).

Residues 1-22 (MPNRRRRKLSTAMSAVAALAVA) form the signal peptide. Over 23–252 (SPCAYFLVYE…MPSIMQAVQN (230 aa)) the chain is Extracellular. Residues 80-216 (TGSGDASTGL…SPATTSTGGG (137 aa)) are disordered. The span at 86-110 (STGLTGPGLTSPGLTSPGLTSPGLT) shows a compositional bias: low complexity. 12 tandem repeats follow at residues 92–96 (PGLTS), 97–101 (PGLTS), 102–106 (PGLTS), 107–111 (PGLTD), 112–116 (PALTS), 117–121 (PGLTP), 144–148 (PALTN), 149–153 (PALTS), 154–158 (PTGAT), 159–163 (PGLTS), 164–168 (PTGLD), and 169–173 (PALGG). Residues 92–121 (PGLTSPGLTSPGLTSPGLTDPALTSPGLTP) form a 6 X 5 AA tandem repeats of P-[GA]-L-T-S region. The segment at 144–173 (PALTNPALTSPTGATPGLTSPTGLDPALGG) is 6 X 5 AA approximate tandem repeats of P-[ATG]-[LG]-X-X. Positions 145-165 (ALTNPALTSPTGATPGLTSPT) are enriched in polar residues. Over residues 202–212 (GTIPSSPATTS) the composition is skewed to low complexity. The helical transmembrane segment at 253 to 273 (GGAAAPAASPPVPPIPAAAAV) threads the bilayer. Residues 274-284 (PPTDPITVPVA) lie on the Cytoplasmic side of the membrane.

The protein to M.leprae 28 kDa antigen.

Its subcellular location is the cell membrane. Surface-exposed protein required for multiplication and intracellular growth. The protein is Exported repetitive protein (erp) of Mycobacterium bovis (strain ATCC BAA-935 / AF2122/97).